Reading from the N-terminus, the 852-residue chain is Exported protein YdbA (852 aa).

A signal peptide spans 1–21 (MQRKTLLSACIALALSGQGWA). 5 disordered regions span residues 30–50 (TTGE…KLSP), 91–145 (DDDH…FNND), 307–354 (TITN…QDGD), 407–449 (TNGG…KVIQ), and 506–531 (NGGT…VDGK). Residues 307 to 319 (TITNGGTGTQING) show a composition bias toward low complexity. Over residues 339–348 (GTEINGNNGK) the composition is skewed to polar residues. The span at 506–516 (NGGTGTQINGN) shows a compositional bias: low complexity. Positions 517 to 526 (DATANNSGKT) are enriched in polar residues.

The protein localises to the secreted. In terms of biological role, the full-length protein (which is about 2000 amino acids long) is part of the autotransporter family. This Escherichia coli (strain K12) protein is Exported protein YdbA (ydbA).